A 212-amino-acid chain; its full sequence is HTH-type transcriptional regulator RutR (212 aa).

An HTH tetR-type domain is found at 17–77; sequence SAKKKAILSA…AVLRQILDIW (61 aa). Residues 39–58 constitute a DNA-binding region (H-T-H motif); the sequence is TRLEQIAELAGVSKTNLLYY.

Homodimer.

Master transcription regulator which represses the degradation of pyrimidines (rutABCDEFG) and purines (gcl operon) for maintenance of metabolic balance between pyrimidines and purines. It also regulates the synthesis of pyrimidine nucleotides and arginine from glutamine (carAB) and the supply of glutamate (gadABWX). The sequence is that of HTH-type transcriptional regulator RutR (rutR) from Escherichia coli O6:H1 (strain CFT073 / ATCC 700928 / UPEC).